The chain runs to 359 residues: Membrane-bound lytic murein transglycosylase C (359 aa).

A signal peptide spans 1–16 (MKKYLALALIAPLLIS). Cysteine 17 carries N-palmitoyl cysteine lipidation. A lipid anchor (S-diacylglycerol cysteine) is attached at cysteine 17.

Belongs to the transglycosylase Slt family.

The protein resides in the cell outer membrane. The enzyme catalyses Exolytic cleavage of the (1-&gt;4)-beta-glycosidic linkage between N-acetylmuramic acid (MurNAc) and N-acetylglucosamine (GlcNAc) residues in peptidoglycan, from either the reducing or the non-reducing ends of the peptidoglycan chains, with concomitant formation of a 1,6-anhydrobond in the MurNAc residue.. Murein-degrading enzyme. May play a role in recycling of muropeptides during cell elongation and/or cell division. This is Membrane-bound lytic murein transglycosylase C from Escherichia coli O7:K1 (strain IAI39 / ExPEC).